Here is an 84-residue protein sequence, read N- to C-terminus: U-actitoxin-Avd8e (84 aa).

A signal peptide spans Met1–Ala22. The propeptide occupies Asp23–Glu41. In terms of domain architecture, ShKT spans Cys44–Cys84. Cystine bridges form between Cys44/Cys84, Cys53/Cys77, and Cys62/Cys81.

The protein belongs to the sea anemone 8 toxin family.

It localises to the secreted. It is found in the nematocyst. The polypeptide is U-actitoxin-Avd8e (Anemonia viridis (Snakelocks anemone)).